Consider the following 193-residue polypeptide: Acyl carrier protein phosphodiesterase (193 aa).

Belongs to the AcpH family.

It carries out the reaction holo-[ACP] + H2O = apo-[ACP] + (R)-4'-phosphopantetheine + H(+). In terms of biological role, converts holo-ACP to apo-ACP by hydrolytic cleavage of the phosphopantetheine prosthetic group from ACP. The chain is Acyl carrier protein phosphodiesterase from Klebsiella pneumoniae (strain 342).